Here is a 552-residue protein sequence, read N- to C-terminus: Harmonin (552 aa).

Positions 1-86 (MDRKVAREFR…LTPRRSRKLK (86 aa)) are N-terminal domain. PDZ domains follow at residues 87-169 (EVRL…HIGL) and 211-293 (KVFI…AAAG). Residues 194-552 (GVRGSLGSPG…KEYDDELTFF (359 aa)) are mediates interaction with MYO7B. A Phosphoserine modification is found at Ser219. Residues 310–377 (RELQRQELLM…EKFKKQWEED (68 aa)) are a coiled coil. Positions 401–427 (KPKYDQGVEPELEPADDLDGGTEEQGE) are disordered. Residues 408 to 427 (VEPELEPADDLDGGTEEQGE) show a composition bias toward acidic residues. The PDZ 3 domain maps to 452 to 537 (DVRLLRIKKE…QGGDWIDLVV (86 aa)).

As to quaternary structure, part of the IMAC/intermicrovillar adhesion complex/intermicrovillar tip-link complex composed of ANKS4B, MYO7B, USH1C, CDHR2 and CDHR5. Part of a complex composed of USH1C, USH1G and MYO7A. Interacts with F-actin. Interacts with USH2A. Interacts with SLC4A7. Interacts (via PDZ1 domain) with the C-terminus of USHBP1. Interacts (via N-terminus and PDZ 2 domain) with CDH23. Interacts with USH1G. Interacts with MYO7B. Interacts with CDHR2 and CDHR5; may mediate their interaction with MYO7B at the microvilli tip. Interacts (via PDZ 1 domain) with ANKS4B. Interacts (via PDZ 1 domain) with DOCK4. In terms of tissue distribution, expressed in small intestine, colon, kidney, eye and weakly in pancreas. Expressed also in vestibule of the inner ear.

It is found in the cytoplasm. It localises to the cytosol. The protein localises to the cytoskeleton. The protein resides in the cell projection. Its subcellular location is the microvillus. Functionally, anchoring/scaffolding protein that is a part of the functional network formed by USH1C, USH1G, CDH23 and MYO7A that mediates mechanotransduction in cochlear hair cells. Required for normal development and maintenance of cochlear hair cell bundles. As part of the intermicrovillar adhesion complex/IMAC plays a role in brush border differentiation, controlling microvilli organization and length. Probably plays a central regulatory role in the assembly of the complex, recruiting CDHR2, CDHR5 and MYO7B to the microvilli tips. This is Harmonin (USH1C) from Homo sapiens (Human).